A 226-amino-acid polypeptide reads, in one-letter code: Protein AF-9 homolog (226 aa).

One can recognise a YEATS domain in the interval 8–169 (RIKTLSVSRP…EEFFKILMSR (162 aa)). A coiled-coil region spans residues 187–224 (QLEQEEIDRIEIGIEKVDKEIDELKQKLENLVKQEAIN).

Component of the SWR1 chromatin-remodeling complex composed of at least ACT1, ARP4, RVB1, RVB2, ARP6, YAF9, VPS71, VPS72, SWC3, SWC4, SWC5, SWC7 and SWR1, and perhaps BDF1. Component of the NuA4 histone acetyltransferase complex composed of at least ACT1, ARP4, YAF9, VID21, SWC4, EAF3, EAF5, EAF6, EAF7, EPL1, ESA1, TRA1 and YNG2. Interacts with SWC4.

The protein resides in the cytoplasm. The protein localises to the nucleus. In terms of biological role, component of the SWR1 complex which mediates the ATP-dependent exchange of histone H2A for the H2A variant HZT1 leading to transcriptional regulation of selected genes by chromatin remodeling. Component of the NuA4 histone acetyltransferase complex which is involved in transcriptional activation of selected genes principally by acetylation of nucleosomal histones H4 and H2A. The NuA4 complex is also involved in DNA repair. Yaf9 may also be required for viability in conditions in which the structural integrity of the spindle is compromised. The protein is Protein AF-9 homolog (YAF9) of Saccharomyces cerevisiae (strain ATCC 204508 / S288c) (Baker's yeast).